A 392-amino-acid chain; its full sequence is 4-hydroxy-3-methylbut-2-en-1-yl diphosphate synthase (flavodoxin) (392 aa).

C280, C283, C315, and E322 together coordinate [4Fe-4S] cluster. Residues 371–380 show a composition bias toward basic and acidic residues; it reads TEKGSDHCSE. Residues 371-392 form a disordered region; sequence TEKGSDHCSETTRSGSPVVTVN. Over residues 381–392 the composition is skewed to polar residues; the sequence is TTRSGSPVVTVN.

This sequence belongs to the IspG family. Requires [4Fe-4S] cluster as cofactor.

It catalyses the reaction (2E)-4-hydroxy-3-methylbut-2-enyl diphosphate + oxidized [flavodoxin] + H2O + 2 H(+) = 2-C-methyl-D-erythritol 2,4-cyclic diphosphate + reduced [flavodoxin]. It functions in the pathway isoprenoid biosynthesis; isopentenyl diphosphate biosynthesis via DXP pathway; isopentenyl diphosphate from 1-deoxy-D-xylulose 5-phosphate: step 5/6. Functionally, converts 2C-methyl-D-erythritol 2,4-cyclodiphosphate (ME-2,4cPP) into 1-hydroxy-2-methyl-2-(E)-butenyl 4-diphosphate. In Mycobacterium leprae (strain Br4923), this protein is 4-hydroxy-3-methylbut-2-en-1-yl diphosphate synthase (flavodoxin).